Consider the following 185-residue polypeptide: UPF0669 protein C6orf120 homolog (185 aa).

Positions 1-23 are cleaved as a signal peptide; that stretch reads MATPWRRALLMILASQVVTLVKC. N-linked (GlcNAc...) asparagine glycosylation is present at Asn-47.

Belongs to the UPF0669 family.

The protein resides in the secreted. Its function is as follows. May be involved in induction of apoptosis in CD4(+) T-cells, but not CD8(+) T-cells or hepatocytes. This is UPF0669 protein C6orf120 homolog from Mus musculus (Mouse).